A 132-amino-acid polypeptide reads, in one-letter code: Large ribosomal subunit protein bL12 (132 aa).

The disordered stretch occupies residues 112-132; that stretch reads KEAADKAKTQLEGAGGTINLK.

The protein belongs to the bacterial ribosomal protein bL12 family. As to quaternary structure, homodimer. Part of the ribosomal stalk of the 50S ribosomal subunit. Forms a multimeric L10(L12)X complex, where L10 forms an elongated spine to which 2 to 4 L12 dimers bind in a sequential fashion. Binds GTP-bound translation factors.

Forms part of the ribosomal stalk which helps the ribosome interact with GTP-bound translation factors. Is thus essential for accurate translation. The sequence is that of Large ribosomal subunit protein bL12 from Leifsonia xyli subsp. xyli (strain CTCB07).